We begin with the raw amino-acid sequence, 227 residues long: 2,3-bisphosphoglycerate-dependent phosphoglycerate mutase (227 aa).

Residues 8-15 (RHGKSVWN), 21-22 (TG), arginine 58, 110-113 (ERMY), lysine 121, 137-138 (RR), and 181-182 (GN) contribute to the substrate site. The active-site Tele-phosphohistidine intermediate is the histidine 9. The active-site Proton donor/acceptor is the glutamate 110.

Belongs to the phosphoglycerate mutase family. BPG-dependent PGAM subfamily.

It carries out the reaction (2R)-2-phosphoglycerate = (2R)-3-phosphoglycerate. The protein operates within carbohydrate degradation; glycolysis; pyruvate from D-glyceraldehyde 3-phosphate: step 3/5. Catalyzes the interconversion of 2-phosphoglycerate and 3-phosphoglycerate. The chain is 2,3-bisphosphoglycerate-dependent phosphoglycerate mutase from Chlamydia caviae (strain ATCC VR-813 / DSM 19441 / 03DC25 / GPIC) (Chlamydophila caviae).